The sequence spans 428 residues: Putative POM121-like protein 1 (428 aa).

5 disordered regions span residues 1–23 (MDSLWGPGAGSHPFGVHNSRLSP), 36–204 (KESG…KFPL), 254–293 (DCRPSRPSHTLSSLATGASGLPAVSKAPSMDAQQERHKSQ), 306–384 (TEVP…PSTL), and 402–428 (GPQPQLQQVPRGQNQRSQTSRTSSCPK). Basic and acidic residues predominate over residues 44–62 (EQDKDPRVQENPGDQRRVP). Positions 106–117 (QTSQTSWTSSCT) are enriched in low complexity. Composition is skewed to polar residues over residues 118–129 (NRNAISSSYSST), 144–155 (SHCQLTLSSSKT), 260–269 (PSHTLSSLAT), 326–347 (FSSSDPLPATSSHSQDSAQVTS), and 403–415 (PQPQLQQVPRGQN). Low complexity predominate over residues 416-428 (QRSQTSRTSSCPK).

The protein belongs to the POM121 family.

This is Putative POM121-like protein 1 (POM121L1P) from Homo sapiens (Human).